Consider the following 785-residue polypeptide: Adhesion G-protein coupled receptor G7 (785 aa).

The signal sequence occupies residues 1 to 26 (MRSCRSCNVRVLVAIVCGLLTGIVLG). Residues 27 to 435 (LGIWRMVIRI…KYPKSLDILS (409 aa)) are Extracellular-facing. N-linked (GlcNAc...) asparagine glycans are attached at residues asparagine 82, asparagine 122, asparagine 133, asparagine 152, asparagine 159, asparagine 178, asparagine 195, asparagine 239, asparagine 289, asparagine 348, asparagine 400, and asparagine 408. One can recognise a GAIN-B domain in the interval 271–425 (FSVQKGSSNS…AVLMSFKKDY (155 aa)). Intrachain disulfides connect cysteine 380-cysteine 407 and cysteine 395-cysteine 409. The GPS stretch occupies residues 380 to 425 (CVYWNFLINDWDTQGCQKTGNTTEFLRCNCSHTTNFAVLMSFKKDY). The helical transmembrane segment at 436–456 (NIGCALSIAGLALTILFQILT) threads the bilayer. Residues 457–465 (RKIRKTSVT) lie on the Cytoplasmic side of the membrane. A helical membrane pass occupies residues 466–486 (WVLVSLCSSMLIFNLLFVFGI). Over 487–523 (ENSNKNLKTSDSDINVKPENNKIPESDTIETPNPSCT) the chain is Extracellular. Residues 524–544 (AIAALLHYFLLVTFTWNGLSA) traverse the membrane as a helical segment. At 545 to 561 (TQLYFLLIRTMKPLPRH) the chain is on the cytoplasmic side. A helical membrane pass occupies residues 562–582 (FIIFISLVGWGVPAIIVGVTI). Topologically, residues 583–623 (GSIYALSGNKRYWELDYRQEEICWLAVPKDNDYARSPLLWS) are extracellular. A helical membrane pass occupies residues 624–644 (FIIPVTIILITNITIFVIITV). Residues 645-668 (KVLWKNNQNLTSTKKVSSLKKVFS) lie on the Cytoplasmic side of the membrane. The helical transmembrane segment at 669–689 (TLSIAVVFGVTWILAYAMLIS) threads the bilayer. The Extracellular segment spans residues 690–694 (NDDIR). Residues 695–715 (IVFSYIFCLFNTTQGLQIFIL) form a helical membrane-spanning segment. The Cytoplasmic portion of the chain corresponds to 716 to 785 (YTVRTKVFQS…SGMTEETSLS (70 aa)).

Belongs to the G-protein coupled receptor 2 family. Adhesion G-protein coupled receptor (ADGR) subfamily. Selectively expressed in the intestinal tissues.

Its subcellular location is the membrane. In terms of biological role, orphan receptor. This Mus musculus (Mouse) protein is Adhesion G-protein coupled receptor G7 (Adgrg7).